We begin with the raw amino-acid sequence, 208 residues long: Large ribosomal subunit protein uL3 (208 aa).

A disordered region spans residues glycine 116–alanine 148.

It belongs to the universal ribosomal protein uL3 family. Part of the 50S ribosomal subunit. Forms a cluster with proteins L14 and L19.

Its function is as follows. One of the primary rRNA binding proteins, it binds directly near the 3'-end of the 23S rRNA, where it nucleates assembly of the 50S subunit. The chain is Large ribosomal subunit protein uL3 from Streptococcus pyogenes serotype M12 (strain MGAS2096).